The chain runs to 608 residues: Protein SHQ1 homolog (608 aa).

2 disordered regions span residues 487–531 (DAGS…SFYS) and 543–608 (IVYE…ASTT). A compositionally biased stretch (low complexity) spans 489-498 (GSQGSSPQQQ). Composition is skewed to acidic residues over residues 502–524 (DDLD…DESV) and 543–579 (IVYE…EDDS). Residues 588–608 (EAEGNSVIEQCSNSETAASTT) are compositionally biased toward polar residues.

It belongs to the SHQ1 family.

Required for the quantitative accumulation of H/ACA ribonucleoproteins (RNPs). This Drosophila melanogaster (Fruit fly) protein is Protein SHQ1 homolog.